Here is a 303-residue protein sequence, read N- to C-terminus: Heme A synthase (303 aa).

At 1–8 (MFGKKNLK) the chain is on the cytoplasmic side. The helical transmembrane segment at 9-29 (WLGVVATLMMTFVQLGGALVT) threads the bilayer. Residues 30–67 (KTGSADGCGSSWPLCHGALIPEFFPIDTIIELSHRAVS) lie on the Extracellular side of the membrane. A disulfide bridge connects residues Cys-37 and Cys-44. Glu-60 is a catalytic residue. A heme o-binding site is contributed by His-63. A helical transmembrane segment spans residues 68 to 88 (ALSLLMVLWLVITAWKHIGYI). The Cytoplasmic segment spans residues 89 to 93 (KEIKP). A helical transmembrane segment spans residues 94 to 114 (LSIISVGFLLLQALIGAAAVI). Residues 115 to 125 (WQQNDYVLALH) lie on the Extracellular side of the membrane. Position 125 (His-125) interacts with heme o. Residues 126-146 (FGISLISFSSVFLITLIIFSI) form a helical membrane-spanning segment. The Cytoplasmic portion of the chain corresponds to 147–163 (DQKYEADELYIKKPLRR). Residues 164-184 (LTWLMAIIIYCGVYTGALVRH) traverse the membrane as a helical segment. Residues 185-215 (ADASLAYGGWPLPFHDLVPHSEQDWVQLTHR) lie on the Extracellular side of the membrane. His-214 is a binding site for heme b. The chain crosses the membrane as a helical span at residues 216–236 (IMAFIVFTIIMITYIHAVKNY). The Cytoplasmic portion of the chain corresponds to 237 to 244 (PNNRTVHY). The chain crosses the membrane as a helical span at residues 245 to 265 (GYTAAFILVILQVITGALSIM). Residues 266 to 270 (TNVNL) are Extracellular-facing. A helical membrane pass occupies residues 271–291 (LIALFHALFITYLFGMTTYFI). His-276 lines the heme b pocket. The Cytoplasmic segment spans residues 292 to 303 (MLMLRSVRSDKQ).

It belongs to the COX15/CtaA family. Type 1 subfamily. As to quaternary structure, interacts with CtaB. It depends on heme b as a cofactor.

The protein resides in the cell membrane. It carries out the reaction Fe(II)-heme o + 2 A + H2O = Fe(II)-heme a + 2 AH2. It functions in the pathway porphyrin-containing compound metabolism; heme A biosynthesis; heme A from heme O: step 1/1. Functionally, catalyzes the conversion of heme O to heme A by two successive hydroxylations of the methyl group at C8. The first hydroxylation forms heme I, the second hydroxylation results in an unstable dihydroxymethyl group, which spontaneously dehydrates, resulting in the formyl group of heme A. The sequence is that of Heme A synthase from Staphylococcus aureus (strain MSSA476).